The following is a 557-amino-acid chain: Urocanate hydratase (557 aa).

Positions 1–20 (MSNPRHNEREVRSPRGDELN) are disordered. NAD(+) is bound by residues 52–53 (GG), Gln-130, 176–178 (GMG), Glu-196, Arg-201, 242–243 (NA), 263–267 (QTSAH), 273–274 (YL), and Tyr-322. Cys-410 is a catalytic residue. Gly-492 contacts NAD(+).

It belongs to the urocanase family. NAD(+) serves as cofactor.

Its subcellular location is the cytoplasm. It carries out the reaction 4-imidazolone-5-propanoate = trans-urocanate + H2O. The protein operates within amino-acid degradation; L-histidine degradation into L-glutamate; N-formimidoyl-L-glutamate from L-histidine: step 2/3. In terms of biological role, catalyzes the conversion of urocanate to 4-imidazolone-5-propionate. The protein is Urocanate hydratase of Brucella anthropi (strain ATCC 49188 / DSM 6882 / CCUG 24695 / JCM 21032 / LMG 3331 / NBRC 15819 / NCTC 12168 / Alc 37) (Ochrobactrum anthropi).